The primary structure comprises 859 residues: Protein EFR3 homolog (859 aa).

Over residues 696–714 the composition is skewed to polar residues; it reads RKNDGSGDQWQNDTPNFDS. Residues 696 to 728 form a disordered region; the sequence is RKNDGSGDQWQNDTPNFDSTDGRESPSGYKTVG.

This sequence belongs to the EFR3 family.

This Caenorhabditis elegans protein is Protein EFR3 homolog.